The primary structure comprises 466 residues: ATP synthase subunit beta (466 aa).

Residue Gly152 to Thr159 participates in ATP binding.

Belongs to the ATPase alpha/beta chains family. In terms of assembly, F-type ATPases have 2 components, CF(1) - the catalytic core - and CF(0) - the membrane proton channel. CF(1) has five subunits: alpha(3), beta(3), gamma(1), delta(1), epsilon(1). CF(0) has three main subunits: a(1), b(2) and c(9-12). The alpha and beta chains form an alternating ring which encloses part of the gamma chain. CF(1) is attached to CF(0) by a central stalk formed by the gamma and epsilon chains, while a peripheral stalk is formed by the delta and b chains.

The protein localises to the cell inner membrane. The catalysed reaction is ATP + H2O + 4 H(+)(in) = ADP + phosphate + 5 H(+)(out). Functionally, produces ATP from ADP in the presence of a proton gradient across the membrane. The catalytic sites are hosted primarily by the beta subunits. The protein is ATP synthase subunit beta of Sulfurovum sp. (strain NBC37-1).